The sequence spans 556 residues: Polypeptide N-acetylgalactosaminyltransferase 13 (556 aa).

Over 1 to 4 (MRRF) the chain is Cytoplasmic. The chain crosses the membrane as a helical; Signal-anchor for type II membrane protein span at residues 5–27 (VYCKVVLATSLMWVLVDVFLLLY). Residues 28 to 556 (FSECNKCDDK…WLLRNMTLGT (529 aa)) lie on the Lumenal side of the membrane. Asn-94 and Asn-116 each carry an N-linked (GlcNAc...) asparagine glycan. 5 cysteine pairs are disulfide-bonded: Cys-105-Cys-338, Cys-329-Cys-407, Cys-441-Cys-458, Cys-481-Cys-496, and Cys-522-Cys-539. A catalytic subdomain A region spans residues 114–224 (LPNTSVVIVF…LGWLEPLLAR (111 aa)). Substrate is bound by residues Asp-155 and Arg-185. Residues Asp-208 and His-210 each contribute to the Mn(2+) site. The tract at residues 284–346 (PVRTPTMAGG…TCSHVGHVFR (63 aa)) is catalytic subdomain B. A substrate-binding site is contributed by Trp-315. His-343 contributes to the Mn(2+) binding site. Substrate contacts are provided by Arg-346 and Tyr-351. The Ricin B-type lectin domain maps to 428 to 550 (YSLGEIRNVE…GSRSQQWLLR (123 aa)). An N-linked (GlcNAc...) asparagine glycan is attached at Asn-551.

It belongs to the glycosyltransferase 2 family. GalNAc-T subfamily. Mn(2+) is required as a cofactor. In terms of tissue distribution, specifically expressed in neuronal cells. Not expressed in glial cells such as astrocytes. Expressed at low level.

It localises to the golgi apparatus membrane. The catalysed reaction is L-seryl-[protein] + UDP-N-acetyl-alpha-D-galactosamine = a 3-O-[N-acetyl-alpha-D-galactosaminyl]-L-seryl-[protein] + UDP + H(+). It catalyses the reaction L-threonyl-[protein] + UDP-N-acetyl-alpha-D-galactosamine = a 3-O-[N-acetyl-alpha-D-galactosaminyl]-L-threonyl-[protein] + UDP + H(+). It participates in protein modification; protein glycosylation. In terms of biological role, catalyzes the initial reaction in O-linked oligosaccharide biosynthesis, the transfer of an N-acetyl-D-galactosamine (GalNAc) residue from UDP-GalNAc to a serine or threonine residue on the protein receptor. Generates GalNAc-O-Ser/Thr structure also known as Tn antigen, which itself is immunogenic but also serves as a precursor for the synthesis of different mucin-type O-glycan core structures. Contributes to the synthesis of O-linked glycans on mucins and proteoglycans of the central nervous system. Can glycosylate both unmodified peptides and glycopeptides that already contain an O-linked GalNAc sugar. Transfers GalNAc to Thr-/Ser-rich tandem repeats GTTPSPVPTTSTTSAP of MUC5AC. Transfers GalNAc to three consecutive serine/threonine residues on SDC3 forming a triplet-Tn epitope expressed in Purkinje cells of the developing brain. May promote neurogenesis through glycosylation and stabilization of PDPN. The sequence is that of Polypeptide N-acetylgalactosaminyltransferase 13 (Galnt13) from Mus musculus (Mouse).